A 292-amino-acid chain; its full sequence is 33 kDa chaperonin (292 aa).

2 disulfides stabilise this stretch: Cys-230–Cys-232 and Cys-263–Cys-266.

This sequence belongs to the HSP33 family. Under oxidizing conditions two disulfide bonds are formed involving the reactive cysteines. Under reducing conditions zinc is bound to the reactive cysteines and the protein is inactive.

It localises to the cytoplasm. Redox regulated molecular chaperone. Protects both thermally unfolding and oxidatively damaged proteins from irreversible aggregation. Plays an important role in the bacterial defense system toward oxidative stress. The chain is 33 kDa chaperonin from Salmonella typhimurium (strain LT2 / SGSC1412 / ATCC 700720).